A 442-amino-acid polypeptide reads, in one-letter code: 23S rRNA (uracil(1939)-C(5))-methyltransferase RlmD (442 aa).

Residues 12–70 enclose the TRAM domain; the sequence is SKQLSAKVTLEVTKLDHLGAGMAQHQGKIVFIPGALPNEKVTVQLTEQKKRHARAKLLK. Cysteine 83, cysteine 89, cysteine 92, and cysteine 171 together coordinate [4Fe-4S] cluster. S-adenosyl-L-methionine is bound by residues glutamine 276, phenylalanine 305, asparagine 310, glutamate 326, aspartate 353, and aspartate 373. Residue cysteine 399 is the Nucleophile of the active site.

Belongs to the class I-like SAM-binding methyltransferase superfamily. RNA M5U methyltransferase family. RlmD subfamily.

The enzyme catalyses uridine(1939) in 23S rRNA + S-adenosyl-L-methionine = 5-methyluridine(1939) in 23S rRNA + S-adenosyl-L-homocysteine + H(+). In terms of biological role, catalyzes the formation of 5-methyl-uridine at position 1939 (m5U1939) in 23S rRNA. The polypeptide is 23S rRNA (uracil(1939)-C(5))-methyltransferase RlmD (Shewanella sediminis (strain HAW-EB3)).